A 343-amino-acid chain; its full sequence is Dihydroorotase (343 aa).

Residues His14 and His16 each coordinate Zn(2+). Substrate contacts are provided by residues His16–Arg18 and Asn42. Zn(2+) contacts are provided by Lys99, His136, and His174. Lys99 bears the N6-carboxylysine mark. His136 serves as a coordination point for substrate. Residue Leu219 participates in substrate binding. Asp247 contributes to the Zn(2+) binding site. Residue Asp247 is part of the active site. Substrate-binding residues include His251 and Ala263.

The protein belongs to the metallo-dependent hydrolases superfamily. DHOase family. Class II DHOase subfamily. In terms of assembly, homodimer. Requires Zn(2+) as cofactor.

It carries out the reaction (S)-dihydroorotate + H2O = N-carbamoyl-L-aspartate + H(+). It functions in the pathway pyrimidine metabolism; UMP biosynthesis via de novo pathway; (S)-dihydroorotate from bicarbonate: step 3/3. Functionally, catalyzes the reversible cyclization of carbamoyl aspartate to dihydroorotate. The chain is Dihydroorotase from Variovorax paradoxus (strain S110).